Here is a 172-residue protein sequence, read N- to C-terminus: Putative acetyltransferase YvoF (172 aa).

The protein belongs to the transferase hexapeptide repeat family.

The sequence is that of Putative acetyltransferase YvoF (yvoF) from Bacillus subtilis (strain 168).